Reading from the N-terminus, the 514-residue chain is 2,3-bisphosphoglycerate-independent phosphoglycerate mutase (514 aa).

2 residues coordinate Mn(2+): aspartate 14 and serine 64. Catalysis depends on serine 64, which acts as the Phosphoserine intermediate. Substrate is bound by residues histidine 125, 155–156 (RD), arginine 187, arginine 193, 263–266 (RADR), and lysine 336. Residues aspartate 403, histidine 407, aspartate 444, histidine 445, and histidine 463 each coordinate Mn(2+).

This sequence belongs to the BPG-independent phosphoglycerate mutase family. As to quaternary structure, monomer. Mn(2+) is required as a cofactor.

The catalysed reaction is (2R)-2-phosphoglycerate = (2R)-3-phosphoglycerate. It functions in the pathway carbohydrate degradation; glycolysis; pyruvate from D-glyceraldehyde 3-phosphate: step 3/5. Its function is as follows. Catalyzes the interconversion of 2-phosphoglycerate and 3-phosphoglycerate. The protein is 2,3-bisphosphoglycerate-independent phosphoglycerate mutase of Salmonella typhi.